Reading from the N-terminus, the 230-residue chain is UPF0758 protein plu4865 (230 aa).

The region spanning Ile-108 to Ile-230 is the MPN domain. Positions 179, 181, and 192 each coordinate Zn(2+). The short motif at His-179–Asp-192 is the JAMM motif element.

The protein belongs to the UPF0758 family. YicR subfamily.

In Photorhabdus laumondii subsp. laumondii (strain DSM 15139 / CIP 105565 / TT01) (Photorhabdus luminescens subsp. laumondii), this protein is UPF0758 protein plu4865.